The following is a 177-amino-acid chain: Large ribosomal subunit protein uL6 (177 aa).

This sequence belongs to the universal ribosomal protein uL6 family. In terms of assembly, part of the 50S ribosomal subunit.

This protein binds to the 23S rRNA, and is important in its secondary structure. It is located near the subunit interface in the base of the L7/L12 stalk, and near the tRNA binding site of the peptidyltransferase center. This is Large ribosomal subunit protein uL6 from Colwellia psychrerythraea (strain 34H / ATCC BAA-681) (Vibrio psychroerythus).